Here is a 423-residue protein sequence, read N- to C-terminus: Hydroxymethylglutaryl-CoA synthase-like protein AKT4-1 (423 aa).

The protein belongs to the thiolase-like superfamily. HMG-CoA synthase family.

It functions in the pathway mycotoxin biosynthesis. In terms of biological role, hydroxymethylglutaryl-CoA synthase-like protein; part of the gene clusters that mediate the biosynthesis of the host-selective toxins (HSTs) AK-toxins responsible for Japanese pear black spot disease by the Japanese pear pathotype. AK-toxins are esters of 9,10-epoxy 8-hydroxy 9-methyldecatrienoic acid (EDA). On cellular level, AK-toxins affect plasma membrane of susceptible cells and cause a sudden increase in loss of K(+) after a few minutes of toxin treatment. The acyl-CoA ligase AKT1, the hydrolase AKT2 and enoyl-CoA hydratase AKT3 are all involved in the biosynthesis of the AK-, AF- and ACT-toxin common 9,10-epoxy-8-hydroxy-9-methyl-decatrienoic acid (EDA) structural moiety. Part of the EDA biosynthesis occurs in the peroxisome since these 3 enzymes are localized in peroxisomes. The exact roles of the 3 enzymes, as well as of additional AK-toxin clusters enzymes, including AKT4, AKT6 and AKTS1, have still to be elucidated. The Cytochrome P450 monooxygenase AKT7 on the other side functions to limit production of EDA and AK-toxin, probably via the catalysis of a side reaction of EDA or its precursor. The chain is Hydroxymethylglutaryl-CoA synthase-like protein AKT4-1 from Alternaria alternata (Alternaria rot fungus).